We begin with the raw amino-acid sequence, 213 residues long: Imidazoleglycerol-phosphate dehydratase (213 aa).

The protein belongs to the imidazoleglycerol-phosphate dehydratase family.

It localises to the cytoplasm. It carries out the reaction D-erythro-1-(imidazol-4-yl)glycerol 3-phosphate = 3-(imidazol-4-yl)-2-oxopropyl phosphate + H2O. The protein operates within amino-acid biosynthesis; L-histidine biosynthesis; L-histidine from 5-phospho-alpha-D-ribose 1-diphosphate: step 6/9. The protein is Imidazoleglycerol-phosphate dehydratase of Trichodesmium erythraeum (strain IMS101).